Reading from the N-terminus, the 608-residue chain is N(6)-adenosine-methyltransferase MT-A70-like protein (608 aa).

Over residues 250–265 the composition is skewed to basic and acidic residues; it reads KKKQERRDEKELRPDV. The interval 250–272 is disordered; it reads KKKQERRDEKELRPDVDAGENVT. Residues 395-396 and D413 each bind S-adenosyl-L-methionine; that span reads DL. Positions 414–428 are gate loop 1; the sequence is PPWDIHMELPYGTMS. An interphase loop region spans residues 480-497; it reads QLQRIIRTGRTGHWLNHG. Residues 483–496 are positively charged region required for RNA-binding; the sequence is RIIRTGRTGHWLNH. The segment at 525–533 is gate loop 2; the sequence is VRATSHKPD. S-adenosyl-L-methionine contacts are provided by residues K531, 554–557, and 567–568; these read RPHN and NQ.

The protein belongs to the MT-A70-like family. Component of the WMM complex, a N6-methyltransferase complex composed of a catalytic subcomplex, named MAC, and of an associated subcomplex, named MACOM. The MAC subcomplex is composed of Ime4/Mettl3 and Mettl14. The MACOM subcomplex is composed of fl(2)d, Flacc/Xio, Hakai, vir, and, in some cases of nito. As to expression, expressed in testes. In the ovaries, detected in germaria, prefollicle, follicle and polar cells (at protein levels). Detected in the ooplasm and in the cells of the 16-cell cyst of early stages (at protein levels).

The protein localises to the nucleus. The catalysed reaction is an adenosine in mRNA + S-adenosyl-L-methionine = an N(6)-methyladenosine in mRNA + S-adenosyl-L-homocysteine + H(+). Its function is as follows. Catalytic component of the WMM complex, a complex that mediates N6-methyladenosine (m6A) methylation of mRNAs, a modification that plays a role in the efficiency of mRNA splicing and is required for sex determination. In the heterodimer formed with Mettl14, constitutes the catalytic core. Required for sex determination and dosage compensation via Sxl alternative splicing: m6A methylation acts as a key regulator of Sxl pre-mRNA and promotes female-specific alternative splicing of Sxl, which determines female physiognomy. M6A methylation is also required for neuronal functions. During oogenesis, required for egg chamber development probably as part of the N/Notch signaling. This chain is N(6)-adenosine-methyltransferase MT-A70-like protein, found in Drosophila melanogaster (Fruit fly).